The following is a 120-amino-acid chain: Putative cysteine proteinase inhibitor 11 (120 aa).

The first 24 residues, 1–24 (MARHPGLLLILLAAVAAVATTSRA), serve as a signal peptide directing secretion. Positions 73-77 (QVVQG) match the Secondary area of contact motif.

The protein belongs to the cystatin family. Phytocystatin subfamily.

It is found in the secreted. Functionally, specific inhibitor of cysteine proteinases. Probably involved in the regulation of endogenous processes and in defense against pests and pathogens. In Oryza sativa subsp. japonica (Rice), this protein is Putative cysteine proteinase inhibitor 11.